Here is a 1041-residue protein sequence, read N- to C-terminus: Sarcoplasmic/endoplasmic reticulum calcium ATPase 2 (1041 aa).

The Cytoplasmic portion of the chain corresponds to 1-48 (MENAHTKTVEEVLAYFGVNESTGLSLEQVKKLKEKWGSNELPAEEGKT). Residues 49–69 (LLELVIEQFEDLLVRILLLAA) form a helical membrane-spanning segment. Over 70-89 (CISFVLAWFEEGEETITAFV) the chain is Lumenal. Residues 90 to 110 (EPFVILLILVANAIVGVWQER) form a helical membrane-spanning segment. At 111 to 253 (NAENAIEALK…QERTPLQQKL (143 aa)) the chain is on the cytoplasmic side. The helical transmembrane segment at 254 to 273 (DEFGEQLSKVISLICIAVWI) threads the bilayer. Over 274–295 (INIGHFNDPVHGGSWIRGAIYY) the chain is Lumenal. The chain crosses the membrane as a helical span at residues 296–313 (FKIAVALAVAAIPEGLPA). Residues valine 304, alanine 305, isoleucine 307, and glutamate 309 each contribute to the Ca(2+) site. Residues 314 to 756 (VITTCLALGT…EEGRAIYNNM (443 aa)) are Cytoplasmic-facing. The active-site 4-aspartylphosphate intermediate is the aspartate 351. Mg(2+)-binding residues include aspartate 351 and threonine 353. ATP contacts are provided by threonine 353, glutamate 442, arginine 489, lysine 514, arginine 559, threonine 624, glycine 625, aspartate 626, arginine 677, and lysine 683. Aspartate 702 serves as a coordination point for Mg(2+). Residue asparagine 705 participates in ATP binding. A helical transmembrane segment spans residues 757 to 776 (KQFIRYLISSNVGEVVCIFL). Positions 767 and 770 each coordinate Ca(2+). At 777 to 786 (TAALGFPEAL) the chain is on the lumenal side. Residues 787-807 (IPVQLLWVNLVTDGLPATALG) traverse the membrane as a helical segment. An interaction with PLN region spans residues 787–807 (IPVQLLWVNLVTDGLPATALG). Residues asparagine 795, threonine 798, and aspartate 799 each contribute to the Ca(2+) site. The Cytoplasmic segment spans residues 808–827 (FNPPDLDIMNKPPRNPKEPL). A helical membrane pass occupies residues 828 to 850 (ISGWLFFRYLAIGCYVGAATVGA). The Lumenal segment spans residues 851-896 (AAWWFIAADGGPRVTFYQLSHFLQCKEDNPDFSGVDCVVFESPYPM). A disulfide bridge connects residues cysteine 875 and cysteine 887. Residues 897-916 (TMALSVLVTIEMCNALNSLS) traverse the membrane as a helical segment. Ca(2+) is bound at residue glutamate 907. Residues 917 to 929 (ENQSLMRMPPWEN) are Cytoplasmic-facing. The helical transmembrane segment at 930–948 (IWLVGAICLSMSLHFLILY) threads the bilayer. Residues 931 to 942 (WLVGAICLSMSL) form an interaction with PLN region. Residues 949 to 963 (VEPLPIIFQITPLNV) are Lumenal-facing. The chain crosses the membrane as a helical span at residues 964 to 984 (TQWLMVLKISLPVILLDETLK). The Cytoplasmic segment spans residues 985–1041 (YVARNYLEPGKDSVQPATKPCSLSACTEGVSWPFVFITLPLVIWLYSTDTNFSDMFW).

This sequence belongs to the cation transport ATPase (P-type) (TC 3.A.3) family. Type IIA subfamily. Interacts with sarcolipin (SLN). Interacts with phospholamban (PLN). Interacts with myoregulin (MRLN). Interacts with DWORF. Interacts with TMX2. The cofactor is Mg(2+). As to expression, only isoform 2 is detected in heart, while both isoforms are expressed in brain, with isoform 2 being predominant.

It localises to the endoplasmic reticulum membrane. The protein resides in the sarcoplasmic reticulum membrane. The enzyme catalyses Ca(2+)(in) + ATP + H2O = Ca(2+)(out) + ADP + phosphate + H(+). Reversibly inhibited by phospholamban (PLN) at low calcium concentrations. Inhibited by sarcolipin (SLN) and myoregulin (MRLN). Enhanced by DWORF; DWORF increases activity by displacing sarcolipin (SLN), phospholamban (PLN) and myoregulin (MRLN). In terms of biological role, this magnesium-dependent enzyme catalyzes the hydrolysis of ATP coupled with the translocation of calcium from the cytosol to the sarcoplasmic reticulum lumen. Isoform SERCA2A is involved in the regulation of the contraction/relaxation cycle. May act as a regulator of TNFSF11-mediated Ca(2+) signaling during osteoclastogenesis. This chain is Sarcoplasmic/endoplasmic reticulum calcium ATPase 2 (ATP2A2), found in Gallus gallus (Chicken).